Reading from the N-terminus, the 310-residue chain is Vomeronasal type-1 receptor 90 (310 aa).

Over 1-20 (MRRISTLYGVVDKQAIFFSE) the chain is Extracellular. Residues 21–41 (VVIGISFNSILFLFHIFQFLL) traverse the membrane as a helical segment. Topologically, residues 42–46 (ERRLR) are cytoplasmic. A helical transmembrane segment spans residues 47 to 67 (ITDLIISLLALIHLGMLTVMG). The Extracellular portion of the chain corresponds to 68–93 (FRAVDIFASQNVWNDIKCKSLAHLHR). An intrachain disulfide couples Cys-85 to Cys-172. Residues 94–114 (LLRGLSLCATCLLSIFQAITL) form a helical membrane-spanning segment. Residues 115–135 (SPRSSCLAKFKYKSTQHSLCS) are Cytoplasmic-facing. Residues 136–156 (LLVLWAFYMSCGTHYSFTIVA) form a helical membrane-spanning segment. At 157-183 (DYNFSSRSLIFVTESCIILPMDYITRH) the chain is on the extracellular side. N-linked (GlcNAc...) asparagine glycosylation occurs at Asn-159. Residues 184–204 (LFFILGIFRDVSFIGLMALSS) traverse the membrane as a helical segment. Over 205 to 238 (GYMVALLCRHRKQAQHLHRTSLSPKASPEQRATR) the chain is Cytoplasmic. A helical transmembrane segment spans residues 239–259 (TILLLMSFFVLMYCLDCTISA). Topologically, residues 260–271 (SRLMHNGEPIHH) are extracellular. A helical membrane pass occupies residues 272–292 (SIQMMVSNSYATLSPLLLIVT). At 293–310 (ENRISRFLKSLLGRTVDA) the chain is on the cytoplasmic side.

This sequence belongs to the G-protein coupled receptor 1 family. Expressed in 1-4% of neurons of the vomeronasal organ. Only one pheromone receptor gene may be expressed in a particular neuron. Not expressed in the main olfactory epithelium.

Its subcellular location is the cell membrane. Putative pheromone receptor implicated in the regulation of social as well as reproductive behavior. The sequence is that of Vomeronasal type-1 receptor 90 (Vom1r90) from Rattus norvegicus (Rat).